Reading from the N-terminus, the 357-residue chain is SUN domain-containing protein 3 (357 aa).

Residues 1–47 (MSGKTKARRAAMFFRRCSEDASGSASGNALLSEDENPDANGVTRSWK) lie on the Nuclear side of the membrane. The helical transmembrane segment at 48 to 64 (IILSTMLTLTFLLVGLL) threads the bilayer. Residues 65-357 (NHQWLKETDV…RVHGTPGKHI (293 aa)) are Perinuclear space-facing. Residues 98-146 (RLRMPKEQLELLKKESQNLENNFRQILFLIEQIDVLKALLRDMKDGMDN) are a coiled coil. Residues 193-354 (GASIIEAGTS…YRFRVHGTPG (162 aa)) form the SUN domain.

In terms of assembly, self-associates. Interacts with SYNE1 and SPAG4/SUN4. Proposed to form a spermatogenesis-specific LINC complex with SYNE1 during sperm head formation possibly implicating a SUN domain-based heterotrimer with SPAG4/SUN4 associating with SYNE1.

It is found in the membrane. The protein localises to the nucleus envelope. The protein resides in the nucleus inner membrane. Functionally, as a probable component of the LINC (LInker of Nucleoskeleton and Cytoskeleton) complex, involved in the connection between the nuclear lamina and the cytoskeleton. The nucleocytoplasmic interactions established by the LINC complex play an important role in the transmission of mechanical forces across the nuclear envelope and in nuclear movement and positioning. May be involved in nuclear remodeling during sperm head formation in spermatogenesis. A probable SUN3:SYNE1 LINC complex may tether spermatid nuclei to posterior cytoskeletal structures such as the manchette. The sequence is that of SUN domain-containing protein 3 (SUN3) from Homo sapiens (Human).